Consider the following 361-residue polypeptide: 3-dehydroquinate synthase (361 aa).

This sequence belongs to the archaeal-type DHQ synthase family.

The enzyme catalyses 2-amino-2,3,7-trideoxy-D-lyxo-hept-6-ulosonate + NAD(+) + H2O = 3-dehydroquinate + NH4(+) + NADH + H(+). Functionally, catalyzes the oxidative deamination and cyclization of 2-amino-3,7-dideoxy-D-threo-hept-6-ulosonic acid (ADH) to yield 3-dehydroquinate (DHQ), which is fed into the canonical shikimic pathway of aromatic amino acid biosynthesis. This chain is 3-dehydroquinate synthase, found in Methanococcus maripaludis (strain C7 / ATCC BAA-1331).